Here is a 346-residue protein sequence, read N- to C-terminus: DNA polymerase IV 2 (346 aa).

One can recognise a UmuC domain in the interval 9-191 (ILHVDLDQFL…RTVEALWGVG (183 aa)). Residues Asp13 and Asp111 each contribute to the Mg(2+) site. Glu112 is an active-site residue.

It belongs to the DNA polymerase type-Y family. As to quaternary structure, monomer. It depends on Mg(2+) as a cofactor.

The protein localises to the cytoplasm. It catalyses the reaction DNA(n) + a 2'-deoxyribonucleoside 5'-triphosphate = DNA(n+1) + diphosphate. Its function is as follows. Poorly processive, error-prone DNA polymerase involved in untargeted mutagenesis. Copies undamaged DNA at stalled replication forks, which arise in vivo from mismatched or misaligned primer ends. These misaligned primers can be extended by PolIV. Exhibits no 3'-5' exonuclease (proofreading) activity. May be involved in translesional synthesis, in conjunction with the beta clamp from PolIII. The sequence is that of DNA polymerase IV 2 (dinB2) from Mycobacterium bovis (strain ATCC BAA-935 / AF2122/97).